Consider the following 431-residue polypeptide: Chorismate synthase 2, chloroplastic (431 aa).

The N-terminal 48 residues, 1 to 48 (MASSMLTKQFLGAPFSSFGSGQQPSKLCSSNLRFPTHRSQPKRLEIQA), are a transit peptide targeting the chloroplast. The tract at residues 93-141 (DRRRPGQSRITTPRKETDTCKISSGTADGLTTGSPIKVEVPNTDQRGND) is disordered. Over residues 112 to 126 (CKISSGTADGLTTGS) the composition is skewed to polar residues.

The protein belongs to the chorismate synthase family. In terms of assembly, homotetramer. It depends on FMNH2 as a cofactor. Predominantly expressed in flowers and roots and, to a lesser extent, in stems, leaves, and cotyledons.

It is found in the plastid. The protein localises to the chloroplast. It catalyses the reaction 5-O-(1-carboxyvinyl)-3-phosphoshikimate = chorismate + phosphate. It functions in the pathway metabolic intermediate biosynthesis; chorismate biosynthesis; chorismate from D-erythrose 4-phosphate and phosphoenolpyruvate: step 7/7. In terms of biological role, catalyzes the last common step of the biosynthesis of aromatic amino acids, produced via the shikimic acid pathway. The chain is Chorismate synthase 2, chloroplastic (CS2) from Solanum lycopersicum (Tomato).